Consider the following 100-residue polypeptide: Bombyxin A-2 homolog (100 aa).

A signal peptide spans 1–18 (MRTQVLFLIVVLAVMASG). 3 disulfides stabilise this stretch: C26-C85, C38-C98, and C84-C89. A propeptide spans 47 to 75 (PPYISSENEGYGWKWLERQRARQLDEARG) (c peptide like).

The protein belongs to the insulin family. In terms of assembly, heterodimer of a B chain and an A chain linked by two disulfide bonds.

The protein resides in the secreted. Brain peptide responsible for activation of prothoracic glands to produce ecdysone in insects. The chain is Bombyxin A-2 homolog (SBXA2) from Samia cynthia (Ailanthus silkmoth).